We begin with the raw amino-acid sequence, 100 residues long: Urease subunit gamma (100 aa).

This sequence belongs to the urease gamma subunit family. In terms of assembly, heterotrimer of UreA (gamma), UreB (beta) and UreC (alpha) subunits. Three heterotrimers associate to form the active enzyme.

The protein localises to the cytoplasm. The enzyme catalyses urea + 2 H2O + H(+) = hydrogencarbonate + 2 NH4(+). The protein operates within nitrogen metabolism; urea degradation; CO(2) and NH(3) from urea (urease route): step 1/1. The polypeptide is Urease subunit gamma (Mycolicibacterium gilvum (strain PYR-GCK) (Mycobacterium gilvum (strain PYR-GCK))).